The chain runs to 380 residues: tRNA-specific 2-thiouridylase MnmA (380 aa).

ATP-binding positions include 26-33 and Leu52; that span reads AMSGGVDS. Residue Cys120 is the Nucleophile of the active site. Cys120 and Cys217 are disulfide-bonded. Position 144 (Gly144) interacts with ATP. The tract at residues 166–168 is interaction with tRNA; that stretch reads RDQ. The active-site Cysteine persulfide intermediate is Cys217.

It belongs to the MnmA/TRMU family.

The protein localises to the cytoplasm. The enzyme catalyses S-sulfanyl-L-cysteinyl-[protein] + uridine(34) in tRNA + AH2 + ATP = 2-thiouridine(34) in tRNA + L-cysteinyl-[protein] + A + AMP + diphosphate + H(+). Functionally, catalyzes the 2-thiolation of uridine at the wobble position (U34) of tRNA, leading to the formation of s(2)U34. In Jannaschia sp. (strain CCS1), this protein is tRNA-specific 2-thiouridylase MnmA.